A 256-amino-acid polypeptide reads, in one-letter code: 5-keto-4-deoxy-D-glucarate aldolase (256 aa).

Histidine 50 (proton acceptor) is an active-site residue. Glutamine 151 contacts substrate. Glutamate 153 contributes to the Mg(2+) binding site. The substrate site is built by serine 178 and aspartate 179. Aspartate 179 contributes to the Mg(2+) binding site.

It belongs to the HpcH/HpaI aldolase family. KDGluc aldolase subfamily. As to quaternary structure, homohexamer; trimer of dimers. It depends on Mg(2+) as a cofactor.

It carries out the reaction 5-dehydro-4-deoxy-D-glucarate = 2-hydroxy-3-oxopropanoate + pyruvate. It catalyses the reaction 2-dehydro-3-deoxy-D-glucarate = 2-hydroxy-3-oxopropanoate + pyruvate. It participates in carbohydrate acid metabolism; galactarate degradation; D-glycerate from galactarate: step 2/3. Functionally, catalyzes the reversible retro-aldol cleavage of both 5-keto-4-deoxy-D-glucarate and 2-keto-3-deoxy-D-glucarate to pyruvate and tartronic semialdehyde. The polypeptide is 5-keto-4-deoxy-D-glucarate aldolase (Shigella boydii serotype 4 (strain Sb227)).